The primary structure comprises 195 residues: Molybdopterin synthase catalytic subunit (195 aa).

Residues 1–37 (MSARPEPQPGSERNATEPLPSHLDPTTYPRTLTTTHG) form a disordered region. A compositionally biased stretch (low complexity) spans 25–37 (PTTYPRTLTTTHG). Substrate contacts are provided by residues 141–142 (HR), Lys157, and 164–166 (KRE).

This sequence belongs to the MoaE family. MOCS2B subfamily. As to quaternary structure, heterotetramer; composed of 2 small (MOCS2A) and 2 large (MOCS2B) subunits.

It is found in the cytoplasm. The catalysed reaction is 2 [molybdopterin-synthase sulfur-carrier protein]-C-terminal-Gly-aminoethanethioate + cyclic pyranopterin phosphate + H2O = molybdopterin + 2 [molybdopterin-synthase sulfur-carrier protein]-C-terminal Gly-Gly + 2 H(+). It participates in cofactor biosynthesis; molybdopterin biosynthesis. In terms of biological role, catalytic subunit of the molybdopterin synthase complex, a complex that catalyzes the conversion of precursor Z into molybdopterin. Acts by mediating the incorporation of 2 sulfur atoms from thiocarboxylated MOCS2A into precursor Z to generate a dithiolene group. This chain is Molybdopterin synthase catalytic subunit, found in Emericella nidulans (strain FGSC A4 / ATCC 38163 / CBS 112.46 / NRRL 194 / M139) (Aspergillus nidulans).